Reading from the N-terminus, the 79-residue chain is Biotin synthase auxiliary protein (79 aa).

Belongs to the BsaP family. Requires iron-sulfur cluster as cofactor.

In terms of biological role, required for the activity of the biotin synthase BioB. The sequence is that of Biotin synthase auxiliary protein from Mycobacterium bovis (strain ATCC BAA-935 / AF2122/97).